The sequence spans 173 residues: Mesogenin-1 (173 aa).

Residues 39-68 (ESYSLSQTPSPQSVSPAASYESTYSSSPHT) show a composition bias toward polar residues. 2 disordered regions span residues 39-69 (ESYS…PHTG) and 96-117 (TKKD…ASER). Positions 99-114 (DHGHKTSMTTHRRRKA) are enriched in basic residues. Residues 109 to 163 (HRRRKASEREKLRMRAIAEALHTLRNNLPPMYSQGRQPLTKIQTLKCTINYISEL) form the bHLH domain.

The protein resides in the nucleus. Its function is as follows. Involved in specifying the paraxial, but not dorsal, mesoderm. May regulate the expression of T-box transcription factors required for mesoderm formation and differentiation, such as brachyury T, wnt8, vegt and eomes. The chain is Mesogenin-1 (msgn1) from Xenopus laevis (African clawed frog).